A 346-amino-acid polypeptide reads, in one-letter code: [LysW]-lysine/[LysW]-ornithine hydrolase (346 aa).

His-68 lines the Zn(2+) pocket. Residue Asp-70 is part of the active site. Asp-92 is a binding site for Zn(2+). Glu-122 functions as the Proton acceptor in the catalytic mechanism. Positions 123, 146, and 317 each coordinate Zn(2+).

This sequence belongs to the peptidase M20A family. LysK subfamily. It depends on Zn(2+) as a cofactor. Co(2+) is required as a cofactor.

Its subcellular location is the cytoplasm. It carries out the reaction [amino-group carrier protein]-C-terminal-gamma-(L-lysyl)-L-glutamate + H2O = [amino-group carrier protein]-C-terminal-L-glutamate + L-lysine. The catalysed reaction is [amino-group carrier protein]-C-terminal-gamma-(L-ornithyl)-L-glutamate + H2O = [amino-group carrier protein]-C-terminal-L-glutamate + L-ornithine. Its pathway is amino-acid biosynthesis; L-lysine biosynthesis via AAA pathway; L-lysine from L-alpha-aminoadipate (Thermus route): step 5/5. It functions in the pathway amino-acid biosynthesis; L-arginine biosynthesis. Its function is as follows. Catalyzes the release of L-lysine from [LysW]-gamma-L-lysine and the release of L-ornithine from [LysW]-L-ornithine. In Saccharolobus solfataricus (strain ATCC 35092 / DSM 1617 / JCM 11322 / P2) (Sulfolobus solfataricus), this protein is [LysW]-lysine/[LysW]-ornithine hydrolase.